A 195-amino-acid polypeptide reads, in one-letter code: Probable GTP-binding protein EngB (195 aa).

Positions 24–195 (DWPEIALAGR…EAWEAILRYL (172 aa)) constitute an EngB-type G domain. Residues 32-39 (GRSNVGKS), 59-63 (GKTQL), 77-80 (DVPG), 144-147 (TKAD), and 176-178 (FSS) each bind GTP. Mg(2+) contacts are provided by Ser-39 and Thr-61.

The protein belongs to the TRAFAC class TrmE-Era-EngA-EngB-Septin-like GTPase superfamily. EngB GTPase family. Mg(2+) is required as a cofactor.

Functionally, necessary for normal cell division and for the maintenance of normal septation. This is Probable GTP-binding protein EngB from Lactococcus lactis subsp. lactis (strain IL1403) (Streptococcus lactis).